Here is a 184-residue protein sequence, read N- to C-terminus: Large ribosomal subunit protein uL22 (184 aa).

The tract at residues 160 to 184 (PEEEVAQKKKISQKKLKKQKLMARE) is disordered. A compositionally biased stretch (basic residues) spans 167-184 (KKKISQKKLKKQKLMARE).

It belongs to the universal ribosomal protein uL22 family. In terms of assembly, component of the large ribosomal subunit.

Its subcellular location is the cytoplasm. Its function is as follows. Component of the large ribosomal subunit. The ribosome is a large ribonucleoprotein complex responsible for the synthesis of proteins in the cell. This is Large ribosomal subunit protein uL22 (RPL17) from Bos taurus (Bovine).